Here is a 106-residue protein sequence, read N- to C-terminus: NADH dehydrogenase [ubiquinone] 1 beta subcomplex subunit 10-B (106 aa).

The interval Met1–Lys25 is disordered.

Belongs to the complex I NDUFB10 subunit family. In terms of assembly, complex I is composed of at least 49 different subunits.

It localises to the mitochondrion inner membrane. Accessory subunit of the mitochondrial membrane respiratory chain NADH dehydrogenase (Complex I), that is believed not to be involved in catalysis. Complex I functions in the transfer of electrons from NADH to the respiratory chain. The immediate electron acceptor for the enzyme is believed to be ubiquinone. The polypeptide is NADH dehydrogenase [ubiquinone] 1 beta subcomplex subunit 10-B (Arabidopsis thaliana (Mouse-ear cress)).